A 44-amino-acid polypeptide reads, in one-letter code: Photosystem I reaction center subunit IX (44 aa).

A helical transmembrane segment spans residues 9-29 (WFRSAPVVATIWIVLTAGILV).

This sequence belongs to the PsaJ family.

It is found in the cellular thylakoid membrane. In terms of biological role, may help in the organization of the PsaE and PsaF subunits. In Prochlorococcus marinus (strain MIT 9211), this protein is Photosystem I reaction center subunit IX.